The chain runs to 281 residues: Probable superoxide dismutase [Fe] (281 aa).

Fe cation-binding residues include His104, His152, Asp236, and His240.

This sequence belongs to the iron/manganese superoxide dismutase family. The cofactor is Fe cation.

The catalysed reaction is 2 superoxide + 2 H(+) = H2O2 + O2. Its function is as follows. Destroys superoxide anion radicals which are normally produced within the cells and which are toxic to biological systems. The polypeptide is Probable superoxide dismutase [Fe] (sodF) (Bacillus subtilis (strain 168)).